The primary structure comprises 204 residues: UPF0637 protein lin1053 (204 aa).

Belongs to the UPF0637 family.

The chain is UPF0637 protein lin1053 from Listeria innocua serovar 6a (strain ATCC BAA-680 / CLIP 11262).